The sequence spans 123 residues: Small ribosomal subunit protein uS11 (123 aa).

This sequence belongs to the universal ribosomal protein uS11 family. In terms of assembly, part of the 30S ribosomal subunit. Interacts with proteins S7 and S18. Binds to IF-3.

Located on the platform of the 30S subunit, it bridges several disparate RNA helices of the 16S rRNA. Forms part of the Shine-Dalgarno cleft in the 70S ribosome. The protein is Small ribosomal subunit protein uS11 of Coxiella burnetii (strain RSA 331 / Henzerling II).